Consider the following 222-residue polypeptide: Glutathione S-transferase A2 (222 aa).

The residue at position 2 (Ala-2) is an N-acetylalanine. The GST N-terminal domain occupies 3–83; sequence EKPKLHYSNI…YIASKYNLYG (81 aa). The residue at position 4 (Lys-4) is an N6-succinyllysine. Residues Tyr-9, Arg-45, 54–55, and 67–68 each bind glutathione; these read QV and QT. Residues 85-207 form the GST C-terminal domain; sequence DIKEKALIDM…LQPGSPRKPP (123 aa). The interval 199-222 is disordered; sequence QPGSPRKPPMDEKSLEESRKIFRF. Positions 206-222 are enriched in basic and acidic residues; it reads PPMDEKSLEESRKIFRF.

This sequence belongs to the GST superfamily. Alpha family. Homodimer or heterodimer of GSTA1 and GSTA2. In terms of tissue distribution, liver.

The protein localises to the cytoplasm. It catalyses the reaction RX + glutathione = an S-substituted glutathione + a halide anion + H(+). In terms of biological role, catalyzes the conjugation of glutathione to a large variety of electrophilic compounds. This is Glutathione S-transferase A2 (GSTA2) from Homo sapiens (Human).